The chain runs to 463 residues: MTSTRTETDTFGPIEVASDRYWGAQAQRSLGNFKIGWEKQPLAIVRALGIVKQAAARANMALGRLDPAIGDAIVKAAQEVIDGKLDEHFPLVVWQTGSGTQSNMNANEVVSNRAIELLGGVMGSKKPVHPNDHVNMSQSSNDTYPTAMHIACAERVIHDLLPALKHLHKALEEKVKAFDHIIKIGRTHTQDATPLTLGQEFSGYAAQVASSIKRIEMTLPGLCELAQGGTAVGTGLNAPVGFAEKVAEEIAAITGIGFTSAPNKFEALAAHDSMVFSHGAINATAAALFKIANDIRFLGSGPRSGLGELSLPENEPGSSIMPGKVNPTQCEALTQVCVQVFGNHAALTFAGSQGHFELNVYNPLMAYNFLQSVQLLADAAISFTDNCVVGIEAREDNIKAALDRSLMLVTALAPKIGYDNAAKIAKTAHKNGTTLREEAVGGGYVTDEEFDAVVRPETMIGPA.

Substrate-binding positions include serine 98 to threonine 100, histidine 129 to aspartate 132, serine 139 to asparagine 141, and threonine 187. Histidine 188 acts as the Proton donor/acceptor in catalysis. Residue serine 318 is part of the active site. Substrate is bound by residues serine 319 and lysine 324 to asparagine 326.

This sequence belongs to the class-II fumarase/aspartase family. Fumarase subfamily. Homotetramer.

It localises to the cytoplasm. The catalysed reaction is (S)-malate = fumarate + H2O. Its pathway is carbohydrate metabolism; tricarboxylic acid cycle; (S)-malate from fumarate: step 1/1. Functionally, involved in the TCA cycle. Catalyzes the stereospecific interconversion of fumarate to L-malate. The chain is Fumarate hydratase class II from Rhizobium meliloti (strain 1021) (Ensifer meliloti).